The primary structure comprises 242 residues: Phosphoribosylaminoimidazole-succinocarboxamide synthase (242 aa).

This sequence belongs to the SAICAR synthetase family.

The catalysed reaction is 5-amino-1-(5-phospho-D-ribosyl)imidazole-4-carboxylate + L-aspartate + ATP = (2S)-2-[5-amino-1-(5-phospho-beta-D-ribosyl)imidazole-4-carboxamido]succinate + ADP + phosphate + 2 H(+). Its pathway is purine metabolism; IMP biosynthesis via de novo pathway; 5-amino-1-(5-phospho-D-ribosyl)imidazole-4-carboxamide from 5-amino-1-(5-phospho-D-ribosyl)imidazole-4-carboxylate: step 1/2. This is Phosphoribosylaminoimidazole-succinocarboxamide synthase from Trichodesmium erythraeum (strain IMS101).